The sequence spans 473 residues: Photosystem II CP43 reaction center protein (473 aa).

A propeptide spanning residues 1–14 is cleaved from the precursor; that stretch reads MKTLYSLRRFYPVE. An N-acetylthreonine modification is found at threonine 15. Threonine 15 is subject to Phosphothreonine. A run of 5 helical transmembrane segments spans residues 69–93, 134–155, 178–200, 255–275, and 291–312; these read LFEVAHFVPEKPMYEQGLILLPHLA, LLGPETLEESFPFFGYVWKDRN, KALYFGGVYDTWAPGGGDVRKIT, KPFAWARRAFVWSGEAYLSYS, and WFNNTAYPSEFYGPTGPEASQA. Glutamate 367 serves as a coordination point for [CaMn4O5] cluster. Residues 447–471 form a helical membrane-spanning segment; it reads RARAAAAGFEKGIDRDLEPVLSMTP.

It belongs to the PsbB/PsbC family. PsbC subfamily. In terms of assembly, PSII is composed of 1 copy each of membrane proteins PsbA, PsbB, PsbC, PsbD, PsbE, PsbF, PsbH, PsbI, PsbJ, PsbK, PsbL, PsbM, PsbT, PsbX, PsbY, PsbZ, Psb30/Ycf12, at least 3 peripheral proteins of the oxygen-evolving complex and a large number of cofactors. It forms dimeric complexes. Requires Binds multiple chlorophylls and provides some of the ligands for the Ca-4Mn-5O cluster of the oxygen-evolving complex. It may also provide a ligand for a Cl- that is required for oxygen evolution. PSII binds additional chlorophylls, carotenoids and specific lipids. as cofactor.

The protein resides in the plastid. The protein localises to the chloroplast thylakoid membrane. Its function is as follows. One of the components of the core complex of photosystem II (PSII). It binds chlorophyll and helps catalyze the primary light-induced photochemical processes of PSII. PSII is a light-driven water:plastoquinone oxidoreductase, using light energy to abstract electrons from H(2)O, generating O(2) and a proton gradient subsequently used for ATP formation. This is Photosystem II CP43 reaction center protein from Phalaenopsis aphrodite subsp. formosana (Moth orchid).